Reading from the N-terminus, the 487-residue chain is Probable cytosol aminopeptidase (487 aa).

The Mn(2+) site is built by K253 and D258. Residue K265 is part of the active site. Positions 277, 337, and 339 each coordinate Mn(2+). R341 is an active-site residue.

It belongs to the peptidase M17 family. Mn(2+) serves as cofactor.

The protein resides in the cytoplasm. The catalysed reaction is Release of an N-terminal amino acid, Xaa-|-Yaa-, in which Xaa is preferably Leu, but may be other amino acids including Pro although not Arg or Lys, and Yaa may be Pro. Amino acid amides and methyl esters are also readily hydrolyzed, but rates on arylamides are exceedingly low.. It carries out the reaction Release of an N-terminal amino acid, preferentially leucine, but not glutamic or aspartic acids.. Functionally, presumably involved in the processing and regular turnover of intracellular proteins. Catalyzes the removal of unsubstituted N-terminal amino acids from various peptides. In Parasynechococcus marenigrum (strain WH8102), this protein is Probable cytosol aminopeptidase.